The following is a 72-amino-acid chain: Translation initiation factor IF-1 (72 aa).

Positions 1-72 constitute an S1-like domain; that stretch reads MAKEETIQMQ…TRARITFRTK (72 aa).

The protein belongs to the IF-1 family. In terms of assembly, component of the 30S ribosomal translation pre-initiation complex which assembles on the 30S ribosome in the order IF-2 and IF-3, IF-1 and N-formylmethionyl-tRNA(fMet); mRNA recruitment can occur at any time during PIC assembly.

Its subcellular location is the cytoplasm. One of the essential components for the initiation of protein synthesis. Stabilizes the binding of IF-2 and IF-3 on the 30S subunit to which N-formylmethionyl-tRNA(fMet) subsequently binds. Helps modulate mRNA selection, yielding the 30S pre-initiation complex (PIC). Upon addition of the 50S ribosomal subunit IF-1, IF-2 and IF-3 are released leaving the mature 70S translation initiation complex. The protein is Translation initiation factor IF-1 of Nitrosomonas eutropha (strain DSM 101675 / C91 / Nm57).